Here is a 276-residue protein sequence, read N- to C-terminus: NH(3)-dependent NAD(+) synthetase (276 aa).

51-58 is an ATP binding site; it reads GISGGVDS. Aspartate 57 lines the Mg(2+) pocket. Arginine 148 serves as a coordination point for deamido-NAD(+). Threonine 168 serves as a coordination point for ATP. Residue glutamate 173 participates in Mg(2+) binding. Deamido-NAD(+) contacts are provided by lysine 181 and aspartate 188. Lysine 197 and threonine 219 together coordinate ATP. 268-269 contributes to the deamido-NAD(+) binding site; it reads HK.

The protein belongs to the NAD synthetase family. As to quaternary structure, homodimer.

The enzyme catalyses deamido-NAD(+) + NH4(+) + ATP = AMP + diphosphate + NAD(+) + H(+). It participates in cofactor biosynthesis; NAD(+) biosynthesis; NAD(+) from deamido-NAD(+) (ammonia route): step 1/1. Functionally, catalyzes the ATP-dependent amidation of deamido-NAD to form NAD. Uses ammonia as a nitrogen source. The protein is NH(3)-dependent NAD(+) synthetase of Streptomyces coelicolor (strain ATCC BAA-471 / A3(2) / M145).